We begin with the raw amino-acid sequence, 355 residues long: MTALKNDRFLRALLKQPVDVTPVWMMRQAGRYLPEYRATRARAGDFMSLCMNPELACEVTLQPLDRYPQLDAAILFSDILTIPDAMGQGLYFETGEGPRFRKVVSSLADIEALPVPDPEKDLGYVMDAVRTIRRELNGRVPLIGFSGSPWTLATYMVEGGSSKDFRKSKAMLYDNPRAMHALLDKLAQSVTSYLNGQIRAGAQAVQIFDSWGGSLSAAAYQEFSLAYMRQIVDGLIREHDGRRVPVILFTKGGGLWLESMAEVGAEALGLDWTCDIGSARARVGERVALQGNMDPSVLYANPAAIRAEVARILAAYGKGTGHVFNLGHGITPEVDPAHAGAFFEAVHELSAQYHG.

Residues 27-31 (RQAGR), aspartate 78, tyrosine 155, serine 210, and histidine 328 each bind substrate.

Belongs to the uroporphyrinogen decarboxylase family. Homodimer.

The protein resides in the cytoplasm. It carries out the reaction uroporphyrinogen III + 4 H(+) = coproporphyrinogen III + 4 CO2. It participates in porphyrin-containing compound metabolism; protoporphyrin-IX biosynthesis; coproporphyrinogen-III from 5-aminolevulinate: step 4/4. Functionally, catalyzes the decarboxylation of four acetate groups of uroporphyrinogen-III to yield coproporphyrinogen-III. The polypeptide is Uroporphyrinogen decarboxylase (Pseudomonas paraeruginosa (strain DSM 24068 / PA7) (Pseudomonas aeruginosa (strain PA7))).